Here is a 319-residue protein sequence, read N- to C-terminus: Acetyl-coenzyme A carboxylase carboxyl transferase subunit alpha (319 aa).

The CoA carboxyltransferase C-terminal domain occupies Asn32–Thr293.

It belongs to the AccA family. In terms of assembly, acetyl-CoA carboxylase is a heterohexamer composed of biotin carboxyl carrier protein (AccB), biotin carboxylase (AccC) and two subunits each of ACCase subunit alpha (AccA) and ACCase subunit beta (AccD).

Its subcellular location is the cytoplasm. The catalysed reaction is N(6)-carboxybiotinyl-L-lysyl-[protein] + acetyl-CoA = N(6)-biotinyl-L-lysyl-[protein] + malonyl-CoA. The protein operates within lipid metabolism; malonyl-CoA biosynthesis; malonyl-CoA from acetyl-CoA: step 1/1. Its function is as follows. Component of the acetyl coenzyme A carboxylase (ACC) complex. First, biotin carboxylase catalyzes the carboxylation of biotin on its carrier protein (BCCP) and then the CO(2) group is transferred by the carboxyltransferase to acetyl-CoA to form malonyl-CoA. The sequence is that of Acetyl-coenzyme A carboxylase carboxyl transferase subunit alpha from Thioalkalivibrio sulfidiphilus (strain HL-EbGR7).